A 153-amino-acid polypeptide reads, in one-letter code: Neuromedin-S (153 aa).

Positions 1 to 26 are cleaved as a signal peptide; sequence MKHLRPQFPLILAIYCFCMLQIPSSG. Propeptides lie at residues 27–69, 70–105, and 106–108; these read FPQP…IYKR, FLFH…ANRR, and MKR. The residue at position 141 (Asn-141) is an Asparagine amide. The propeptide occupies 144–153; it reads NIEDEAQIQW.

The protein belongs to the NmU family.

The protein localises to the secreted. In terms of biological role, implicated in the regulation of circadian rhythms through autocrine and/or paracrine actions. The polypeptide is Neuromedin-S (NMS) (Homo sapiens (Human)).